A 560-amino-acid polypeptide reads, in one-letter code: Zinc finger protein 619 (560 aa).

10 C2H2-type zinc fingers span residues 188–210, 216–238, 244–266, 272–294, 300–322, 328–350, 356–378, 384–406, 412–434, and 440–462; these read YKCG…QRVH, YTCK…QKIH, YSCE…QKLH, YECT…QRIH, FKCK…ERIH, YECK…QRIH, YECK…QRFH, YKCN…QRIH, YECQ…QRVH, and YECK…QKWH.

This sequence belongs to the krueppel C2H2-type zinc-finger protein family.

Its subcellular location is the nucleus. May be involved in transcriptional regulation. The protein is Zinc finger protein 619 (ZNF619) of Homo sapiens (Human).